Reading from the N-terminus, the 568-residue chain is Urease subunit alpha (568 aa).

The Urease domain maps to 130 to 568 (GGIDTHIHFI…LPMAQRYFLF (439 aa)). Ni(2+)-binding residues include His135, His137, and Lys218. An N6-carboxylysine modification is found at Lys218. Position 220 (His220) interacts with substrate. Residues His247 and His273 each contribute to the Ni(2+) site. The Proton donor role is filled by His321. Asp361 contacts Ni(2+).

This sequence belongs to the metallo-dependent hydrolases superfamily. Urease alpha subunit family. As to quaternary structure, heterotrimer of UreA (gamma), UreB (beta) and UreC (alpha) subunits. Three heterotrimers associate to form the active enzyme. Requires Ni cation as cofactor. Carboxylation allows a single lysine to coordinate two nickel ions.

Its subcellular location is the cytoplasm. The enzyme catalyses urea + 2 H2O + H(+) = hydrogencarbonate + 2 NH4(+). The protein operates within nitrogen metabolism; urea degradation; CO(2) and NH(3) from urea (urease route): step 1/1. The polypeptide is Urease subunit alpha (Burkholderia pseudomallei (strain K96243)).